Consider the following 331-residue polypeptide: E3 ubiquitin-protein ligase Siah2 (331 aa).

The disordered stretch occupies residues 1–26 (MSRPSSAGGAAGGLGAGKAGGSKHGG). Positions 9 to 26 (GAAGGLGAGKAGGSKHGG) are enriched in gly residues. An RING-type zinc finger spans residues 89-124 (CPVCFDYVLPPILQCQAGHLVCNQCRQKLSCCPTCR). The tract at residues 139–331 (VASTLPFPCK…LGINVTISMC (193 aa)) is SBD. An SIAH-type zinc finger spans residues 142–202 (TLPFPCKYSS…VMPHLMHAHK (61 aa)). Positions 147, 154, 166, 170, 177, 184, 196, and 201 each coordinate Zn(2+).

It belongs to the SINA (Seven in absentia) family. As to quaternary structure, homodimer. In terms of tissue distribution, in embryos it is expressed in all blastomeres starting at the mid-blastulla. After 20 somite stage, it is expressed mainly in the posterior part. Expressed in brain, including the eye, the cranial cavity, otic vesicle, optic chiasm and in the gut.

The catalysed reaction is S-ubiquitinyl-[E2 ubiquitin-conjugating enzyme]-L-cysteine + [acceptor protein]-L-lysine = [E2 ubiquitin-conjugating enzyme]-L-cysteine + N(6)-ubiquitinyl-[acceptor protein]-L-lysine.. The protein operates within protein modification; protein ubiquitination. In terms of biological role, E3 ubiquitin-protein ligase that mediates ubiquitination and subsequent proteasomal degradation of target proteins. E3 ubiquitin ligases accept ubiquitin from an E2 ubiquitin-conjugating enzyme in the form of a thioester and then directly transfers the ubiquitin to targeted substrates. It probably triggers the ubiquitin-mediated degradation of different substrates. Induces cellular growth arrest by inhibiting the G2/M transition. May play a role in the regulation of the cellular clock function. This chain is E3 ubiquitin-protein ligase Siah2 (siah2l), found in Danio rerio (Zebrafish).